Consider the following 205-residue polypeptide: Guanylate kinase (205 aa).

A Guanylate kinase-like domain is found at 17 to 195; the sequence is PRLTVLSGPS…VSRELLALML (179 aa). 24–31 is an ATP binding site; sequence GPSGVGKS.

It belongs to the guanylate kinase family.

It localises to the cytoplasm. It catalyses the reaction GMP + ATP = GDP + ADP. Functionally, essential for recycling GMP and indirectly, cGMP. The polypeptide is Guanylate kinase (Streptomyces kasugaensis).